The chain runs to 547 residues: Glucose-6-phosphate isomerase (547 aa).

The active-site Proton donor is Glu354. Active-site residues include His385 and Lys513.

The protein belongs to the GPI family.

It is found in the cytoplasm. It carries out the reaction alpha-D-glucose 6-phosphate = beta-D-fructose 6-phosphate. The protein operates within carbohydrate biosynthesis; gluconeogenesis. It participates in carbohydrate degradation; glycolysis; D-glyceraldehyde 3-phosphate and glycerone phosphate from D-glucose: step 2/4. Functionally, catalyzes the reversible isomerization of glucose-6-phosphate to fructose-6-phosphate. The polypeptide is Glucose-6-phosphate isomerase (Erwinia tasmaniensis (strain DSM 17950 / CFBP 7177 / CIP 109463 / NCPPB 4357 / Et1/99)).